Here is a 368-residue protein sequence, read N- to C-terminus: Proline-rich protein 5-like (368 aa).

The residue at position 28 (serine 28) is a Phosphoserine. A disordered region spans residues 312–368 (LGEESGGEDKCLLLQPSFPPPHRQCSSEPNITDGPDEPEQGATGSQEDSELNCASLS). Over residues 353–368 (ATGSQEDSELNCASLS) the composition is skewed to polar residues.

Belongs to the PROTOR family. As to quaternary structure, interacts with the mammalian target of rapamycin complex 2 (mTORC2) which contains MTOR, MLST8, PRR5, RICTOR, MAPKAP1 and DEPTOR. Interacts with RFFL. Interacts (via C-terminus) with ZFP36 (via C-terminus); this interaction may accelerate ZFP36-mediated mRNA decay during stress. Interacts with RICTOR. Post-translationally, ubiquitinated. Ubiquitination by RFFL promotes proteasomal degradation of PRR5L thereby modifying the substrate-specific activity of the mTORC2 complex. Ubiquitination by RFFL is stimulated by LPA/lysophosphatidic acid.

Associates with the mTORC2 complex that regulates cellular processes including survival and organization of the cytoskeleton. Regulates the activity of the mTORC2 complex in a substrate-specific manner preventing for instance the specific phosphorylation of PKCs and thereby controlling cell migration. Plays a role in the stimulation of ZFP36-mediated mRNA decay of several ZFP36-associated mRNAs, such as TNF-alpha and GM-CSF, in response to stress. Required for ZFP36 localization to cytoplasmic stress granule (SG) and P-body (PB) in response to stress. The sequence is that of Proline-rich protein 5-like (PRR5L) from Bos taurus (Bovine).